Consider the following 727-residue polypeptide: Alpha-1,3-galactosidase A (727 aa).

The disordered stretch occupies residues 220–241; that stretch reads ATNRTWRTSNPVFPERHEDHRP. The segment covering 221–230 has biased composition (polar residues); it reads TNRTWRTSNP. PbH1 repeat units follow at residues 336 to 358, 461 to 483, 484 to 506, 517 to 538, 551 to 572, and 574 to 603; these read KGTV…NIHG, TPTV…LVTT, RRPV…YISS, VRNV…IFFD, HRNV…LSGR, and VGGL…RVGD.

The protein belongs to the glycosyl hydrolase 110 family. A subfamily.

It catalyses the reaction Hydrolysis of terminal, non-reducing branched (1-&gt;3)-alpha-D-galactosidic residues, producing free D-galactose.. The enzyme catalyses Hydrolysis of terminal, non-reducing alpha-D-galactose residues in alpha-D-galactosides, including galactose oligosaccharides, galactomannans and galactolipids.. Its function is as follows. Alpha-galactosidase that specifically removes branched alpha-1,3-linked galactose residues present in blood group B antigens. Has no activity toward linear alpha-1,3-linked galactose residues. The sequence is that of Alpha-1,3-galactosidase A (glaA) from Peterkaempfera griseoplana (Streptacidiphilus griseoplanus).